A 2183-amino-acid polypeptide reads, in one-letter code: DNA polymerase epsilon catalytic subunit A (2183 aa).

Zn(2+) contacts are provided by Cys-2066, Cys-2069, Cys-2090, and Cys-2093. The segment at 2066–2093 (CFKCKNPCDLDLCKDSCCTKSGFRCPLC) adopts a CysA-type zinc-finger fold. Cys-2124, Cys-2127, Cys-2139, and Cys-2141 together coordinate [4Fe-4S] cluster. The short motif at 2124–2141 (CDKCRRVKEYELTEFCPC) is the CysB motif element.

This sequence belongs to the DNA polymerase type-B family. As to quaternary structure, heterotetramer. Consists of 4 subunits: POL2, DPB2, DPB3 and DPB4. [4Fe-4S] cluster is required as a cofactor.

It is found in the nucleus. The catalysed reaction is DNA(n) + a 2'-deoxyribonucleoside 5'-triphosphate = DNA(n+1) + diphosphate. In terms of biological role, DNA polymerase II participates in chromosomal DNA replication. The polypeptide is DNA polymerase epsilon catalytic subunit A (POL2) (Yarrowia lipolytica (strain CLIB 122 / E 150) (Yeast)).